Consider the following 353-residue polypeptide: Uroporphyrinogen decarboxylase (353 aa).

Substrate-binding positions include 27 to 31 (RQAGR), phenylalanine 46, aspartate 76, tyrosine 152, serine 207, and histidine 321.

Belongs to the uroporphyrinogen decarboxylase family. Homodimer.

It localises to the cytoplasm. It catalyses the reaction uroporphyrinogen III + 4 H(+) = coproporphyrinogen III + 4 CO2. The protein operates within porphyrin-containing compound metabolism; protoporphyrin-IX biosynthesis; coproporphyrinogen-III from 5-aminolevulinate: step 4/4. Catalyzes the decarboxylation of four acetate groups of uroporphyrinogen-III to yield coproporphyrinogen-III. This Listeria monocytogenes serovar 1/2a (strain ATCC BAA-679 / EGD-e) protein is Uroporphyrinogen decarboxylase.